Consider the following 357-residue polypeptide: tRNA-specific 2-thiouridylase MnmA (357 aa).

Residues 7-14 (AMSGGVDS) and M33 each bind ATP. The Nucleophile role is filled by C101. Cysteines 101 and 198 form a disulfide. An ATP-binding site is contributed by G125. The interaction with tRNA stretch occupies residues 148 to 150 (KDQ). C198 acts as the Cysteine persulfide intermediate in catalysis.

This sequence belongs to the MnmA/TRMU family.

The protein localises to the cytoplasm. The enzyme catalyses S-sulfanyl-L-cysteinyl-[protein] + uridine(34) in tRNA + AH2 + ATP = 2-thiouridine(34) in tRNA + L-cysteinyl-[protein] + A + AMP + diphosphate + H(+). Its function is as follows. Catalyzes the 2-thiolation of uridine at the wobble position (U34) of tRNA, leading to the formation of s(2)U34. The polypeptide is tRNA-specific 2-thiouridylase MnmA (Herpetosiphon aurantiacus (strain ATCC 23779 / DSM 785 / 114-95)).